The primary structure comprises 366 residues: Histidinol-phosphate aminotransferase (366 aa).

Lys227 is modified (N6-(pyridoxal phosphate)lysine).

It belongs to the class-II pyridoxal-phosphate-dependent aminotransferase family. Histidinol-phosphate aminotransferase subfamily. In terms of assembly, homodimer. Pyridoxal 5'-phosphate is required as a cofactor.

It catalyses the reaction L-histidinol phosphate + 2-oxoglutarate = 3-(imidazol-4-yl)-2-oxopropyl phosphate + L-glutamate. It functions in the pathway amino-acid biosynthesis; L-histidine biosynthesis; L-histidine from 5-phospho-alpha-D-ribose 1-diphosphate: step 7/9. This Campylobacter hominis (strain ATCC BAA-381 / DSM 21671 / CCUG 45161 / LMG 19568 / NCTC 13146 / CH001A) protein is Histidinol-phosphate aminotransferase.